A 116-amino-acid chain; its full sequence is Flagellar transcriptional regulator FlhD (116 aa).

This sequence belongs to the FlhD family. As to quaternary structure, homodimer; disulfide-linked. Forms a heterohexamer composed of two FlhC and four FlhD subunits. Each FlhC binds a FlhD dimer, forming a heterotrimer, and a hexamer assembles by dimerization of two heterotrimers.

Its subcellular location is the cytoplasm. Functions in complex with FlhC as a master transcriptional regulator that regulates transcription of several flagellar and non-flagellar operons by binding to their promoter region. Activates expression of class 2 flagellar genes, including fliA, which is a flagellum-specific sigma factor that turns on the class 3 genes. Also regulates genes whose products function in a variety of physiological pathways. In Escherichia coli O157:H7, this protein is Flagellar transcriptional regulator FlhD.